The primary structure comprises 556 residues: Oxygen-dependent choline dehydrogenase (556 aa).

Position 6-35 (6-35) interacts with FAD; it reads DYIIIGAGSAGNVLAARLTEDPGVSVLLLE. Histidine 475 serves as the catalytic Proton acceptor.

This sequence belongs to the GMC oxidoreductase family. The cofactor is FAD.

The enzyme catalyses choline + A = betaine aldehyde + AH2. It catalyses the reaction betaine aldehyde + NAD(+) + H2O = glycine betaine + NADH + 2 H(+). It functions in the pathway amine and polyamine biosynthesis; betaine biosynthesis via choline pathway; betaine aldehyde from choline (cytochrome c reductase route): step 1/1. Its function is as follows. Involved in the biosynthesis of the osmoprotectant glycine betaine. Catalyzes the oxidation of choline to betaine aldehyde and betaine aldehyde to glycine betaine at the same rate. This chain is Oxygen-dependent choline dehydrogenase, found in Xanthomonas campestris pv. campestris (strain 8004).